The sequence spans 330 residues: MIKAAVVGASGYIGGELVRLLAMHPEVEITAITSRQYAGKKVHKVHPNLRGLDLRFTNDYNFDADVIFLAVPHGTSMKIIEEFLGSAKIIDMSADFRIKKELYEKYYGPHEKPELIDRFTYGLPELHRKEIKKAELVANPGCNATATILGLYPFKDLTQEAIVDLKVSSSAGGRRENIASIHPERSNVVRVYKPYHHRHEAEVLQETRVKAMFTVHSVDLVRGLLATIYFRYEGNERELLRKLLMYKDEPFVRIVTDKGGLQRYPDPKYVIGSNFIDIGFAYDSENSRVMVFSAIDNLIKGGAGQAVQNMNIMFGLKETTGLEYYPVYPV.

Serine 10–isoleucine 13 provides a ligand contact to NADP(+). The active site involves cysteine 142. Asparagine 297 lines the NADP(+) pocket.

It belongs to the NAGSA dehydrogenase family. Type 1 subfamily. LysY sub-subfamily.

Its subcellular location is the cytoplasm. The catalysed reaction is [amino-group carrier protein]-C-terminal-N-(1-carboxy-5-oxopentan-1-yl)-L-glutamine + phosphate + NADP(+) = [amino-group carrier protein]-C-terminal-N-(1-carboxy-5-phosphooxy-5-oxopentan-1-yl)-L-glutamine + NADPH + H(+). It catalyses the reaction [amino-group carrier protein]-C-terminal-gamma-(L-glutamyl-5-semialdehyde)-L-glutamate + phosphate + NADP(+) = [amino-group carrier protein]-C-terminal-gamma-(5-phospho-L-glutamyl)-L-glutamate + NADPH + H(+). It participates in amino-acid biosynthesis; L-lysine biosynthesis via AAA pathway; L-lysine from L-alpha-aminoadipate (Thermus route): step 3/5. Its pathway is amino-acid biosynthesis; L-arginine biosynthesis. In terms of biological role, involved in both the arginine and lysine biosynthetic pathways. This chain is Putative [LysW]-L-2-aminoadipate/[LysW]-L-glutamate phosphate reductase, found in Pyrococcus furiosus (strain ATCC 43587 / DSM 3638 / JCM 8422 / Vc1).